We begin with the raw amino-acid sequence, 856 residues long: Leucine--tRNA ligase (856 aa).

The short motif at 42–52 (PYPSGNLHMGH) is the 'HIGH' region element. The 'KMSKS' region motif lies at 617–621 (KMSKS). K620 provides a ligand contact to ATP.

The protein belongs to the class-I aminoacyl-tRNA synthetase family.

The protein localises to the cytoplasm. It carries out the reaction tRNA(Leu) + L-leucine + ATP = L-leucyl-tRNA(Leu) + AMP + diphosphate. The polypeptide is Leucine--tRNA ligase (Rippkaea orientalis (strain PCC 8801 / RF-1) (Cyanothece sp. (strain PCC 8801))).